Consider the following 220-residue polypeptide: Probable GTP-binding protein EngB (220 aa).

Positions 26–200 constitute an EngB-type G domain; sequence EGIEIAFAGR…RAKLDEWYAP (175 aa). GTP-binding positions include 34–41, 61–65, 79–82, 146–149, and 179–181; these read GRSNAGKS, GRTQL, DLPG, TKAD, and FSS. Positions 41 and 63 each coordinate Mg(2+).

This sequence belongs to the TRAFAC class TrmE-Era-EngA-EngB-Septin-like GTPase superfamily. EngB GTPase family. It depends on Mg(2+) as a cofactor.

In terms of biological role, necessary for normal cell division and for the maintenance of normal septation. The chain is Probable GTP-binding protein EngB from Vibrio cholerae serotype O1 (strain ATCC 39315 / El Tor Inaba N16961).